Here is a 517-residue protein sequence, read N- to C-terminus: GMP synthase [glutamine-hydrolyzing] (517 aa).

A Glutamine amidotransferase type-1 domain is found at 9–199; sequence RILILDFGSQ…VLGVCGCERL (191 aa). Cysteine 86 (nucleophile) is an active-site residue. Catalysis depends on residues histidine 173 and glutamate 175. Residues 200-392 enclose the GMPS ATP-PPase domain; that stretch reads WTSESIIEDA…LGLPYNMLYR (193 aa). 227–233 provides a ligand contact to ATP; the sequence is SGGVDSS.

In terms of assembly, homodimer.

The catalysed reaction is XMP + L-glutamine + ATP + H2O = GMP + L-glutamate + AMP + diphosphate + 2 H(+). It functions in the pathway purine metabolism; GMP biosynthesis; GMP from XMP (L-Gln route): step 1/1. In terms of biological role, catalyzes the synthesis of GMP from XMP. The polypeptide is GMP synthase [glutamine-hydrolyzing] (Vibrio cholerae serotype O1 (strain ATCC 39541 / Classical Ogawa 395 / O395)).